The chain runs to 385 residues: SWI/SNF-related matrix-associated actin-dependent regulator of chromatin subfamily B member 1 (385 aa).

A DNA-binding region spans residues Met1–Ser113. Glycyl lysine isopeptide (Lys-Gly) (interchain with G-Cter in SUMO2) cross-links involve residues Lys106, Lys108, and Lys124. Ser129 carries the phosphoserine modification. Lys161 participates in a covalent cross-link: Glycyl lysine isopeptide (Lys-Gly) (interchain with G-Cter in SUMO2). The segment at Pro183–Gln243 is HIV-1 integrase-binding. A run of 2 repeats spans residues Leu186–Ile245 and Asp259–Leu319. The segment at Leu186–Ile245 is MYC-binding. Residues Leu186–Leu319 are 2 X approximate tandem repeats. Residues Gly304 to Gln318 form an interaction with PPP1R15A region.

The protein belongs to the SNF5 family. As to quaternary structure, component of the multiprotein chromatin-remodeling complexes SWI/SNF: SWI/SNF-A (BAF), SWI/SNF-B (PBAF) and related complexes. The canonical complex contains a catalytic subunit (either SMARCA4/BRG1/BAF190A or SMARCA2/BRM/BAF190B) and at least SMARCE1, ACTL6A/BAF53, SMARCC1/BAF155, SMARCC2/BAF170, and SMARCB1/SNF5/BAF47. Other subunits specific to each of the complexes may also be present permitting several possible combinations developmentally and tissue specific. Component of the BAF complex, which includes at least actin (ACTB), ARID1A/BAF250A, ARID1B/BAF250B, SMARCA2/BRM, SMARCA4/BRG1/BAF190A, ACTL6A/BAF53, ACTL6B/BAF53B, SMARCE1/BAF57 SMARCC1/BAF155, SMARCC2/BAF170, SMARCB1/SNF5/INI1, and one or more SMARCD1/BAF60A, SMARCD2/BAF60B, or SMARCD3/BAF60C. In muscle cells, the BAF complex also contains DPF3. Component of neural progenitors-specific chromatin remodeling complex (npBAF complex) composed of at least, ARID1A/BAF250A or ARID1B/BAF250B, SMARCD1/BAF60A, SMARCD3/BAF60C, SMARCA2/BRM/BAF190B, SMARCA4/BRG1/BAF190A, SMARCB1/BAF47, SMARCC1/BAF155, SMARCE1/BAF57, SMARCC2/BAF170, PHF10/BAF45A, ACTL6A/BAF53A and actin. Component of neuron-specific chromatin remodeling complex (nBAF complex) composed of at least, ARID1A/BAF250A or ARID1B/BAF250B, SMARCD1/BAF60A, SMARCD3/BAF60C, SMARCA2/BRM/BAF190B, SMARCA4/BRG1/BAF190A, SMARCB1/BAF47, SMARCC1/BAF155, SMARCE1/BAF57, SMARCC2/BAF170, DPF1/BAF45B, DPF3/BAF45C, ACTL6B/BAF53B and actin. Component of the SWI/SNF-B (PBAF) chromatin remodeling complex, at least composed of SMARCA4/BRG1, SMARCB1/BAF47/SNF5, ACTL6A/BAF53A or ACTL6B/BAF53B, SMARCE1/BAF57, SMARCD1/BAF60A, SMARCD2/BAF60B, perhaps SMARCD3/BAF60C, SMARCC1/BAF155, SMARCC2/BAF170, PBRM1/BAF180, ARID2/BAF200 and actin. Binds to double-stranded DNA. Interacts with CEBPB (when not methylated). Interacts with PIH1D1. Interacts with MYK and MAEL. Interacts with PPP1R15A. Interacts with DPF2. Interacts with YWHAZ. Interacts with ERCC6. Interacts with FOS, FOSB isoform 1 and 2, FOSL1 and FOSL2. In terms of assembly, (Microbial infection) Binds tightly to the human immunodeficiency virus-type 1 (HIV-1) integrase in vitro and stimulates its DNA-joining activity. Interacts with human papillomavirus 18 E1 protein to stimulate its viral replication. Interacts with Epstein-Barr virus protein EBNA-2.

The protein localises to the nucleus. In terms of biological role, core component of the BAF (hSWI/SNF) complex. This ATP-dependent chromatin-remodeling complex plays important roles in cell proliferation and differentiation, in cellular antiviral activities and inhibition of tumor formation. The BAF complex is able to create a stable, altered form of chromatin that constrains fewer negative supercoils than normal. This change in supercoiling would be due to the conversion of up to one-half of the nucleosomes on polynucleosomal arrays into asymmetric structures, termed altosomes, each composed of 2 histones octamers. Stimulates in vitro the remodeling activity of SMARCA4/BRG1/BAF190A. Involved in activation of CSF1 promoter. Belongs to the neural progenitors-specific chromatin remodeling complex (npBAF complex) and the neuron-specific chromatin remodeling complex (nBAF complex). During neural development a switch from a stem/progenitor to a postmitotic chromatin remodeling mechanism occurs as neurons exit the cell cycle and become committed to their adult state. The transition from proliferating neural stem/progenitor cells to postmitotic neurons requires a switch in subunit composition of the npBAF and nBAF complexes. As neural progenitors exit mitosis and differentiate into neurons, npBAF complexes which contain ACTL6A/BAF53A and PHF10/BAF45A, are exchanged for homologous alternative ACTL6B/BAF53B and DPF1/BAF45B or DPF3/BAF45C subunits in neuron-specific complexes (nBAF). The npBAF complex is essential for the self-renewal/proliferative capacity of the multipotent neural stem cells. The nBAF complex along with CREST plays a role regulating the activity of genes essential for dendrite growth. Plays a key role in cell-cycle control and causes cell cycle arrest in G0/G1. The sequence is that of SWI/SNF-related matrix-associated actin-dependent regulator of chromatin subfamily B member 1 (SMARCB1) from Homo sapiens (Human).